The chain runs to 476 residues: Glycogen synthase (476 aa).

Lysine 15 serves as a coordination point for ADP-alpha-D-glucose.

This sequence belongs to the glycosyltransferase 1 family. Bacterial/plant glycogen synthase subfamily.

It catalyses the reaction [(1-&gt;4)-alpha-D-glucosyl](n) + ADP-alpha-D-glucose = [(1-&gt;4)-alpha-D-glucosyl](n+1) + ADP + H(+). It participates in glycan biosynthesis; glycogen biosynthesis. Functionally, synthesizes alpha-1,4-glucan chains using ADP-glucose. This Yersinia pestis bv. Antiqua (strain Antiqua) protein is Glycogen synthase.